The chain runs to 454 residues: Alpha-1,3-mannosyl-glycoprotein 4-beta-N-acetylglucosaminyltransferase C (454 aa).

Residues 1-6 (MRCHLK) lie on the Cytoplasmic side of the membrane. The chain crosses the membrane as a helical; Signal-anchor for type II membrane protein span at residues 7–24 (KWVVVAAGLSILTSLYVY). Residues 25-454 (MQRAQSGNLK…VWTVKEDKTI (430 aa)) are Lumenal-facing. Asn58 and Asn189 each carry an N-linked (GlcNAc...) asparagine glycan.

Belongs to the glycosyltransferase 54 family. A divalent metal cation is required as a cofactor.

The protein resides in the golgi apparatus membrane. The catalysed reaction is N(4)-{beta-D-GlcNAc-(1-&gt;2)-alpha-D-Man-(1-&gt;3)-[beta-D-GlcNAc-(1-&gt;2)-alpha-D-Man-(1-&gt;6)]-beta-D-Man-(1-&gt;4)-beta-D-GlcNAc-(1-&gt;4)-beta-D-GlcNAc}-L-asparaginyl-[protein] + UDP-N-acetyl-alpha-D-glucosamine = N(4)-{beta-D-GlcNAc-(1-&gt;2)-[beta-D-GlcNAc-(1-&gt;4)]-alpha-D-Man-(1-&gt;3)-[beta-D-GlcNAc-(1-&gt;2)-alpha-D-Man-(1-&gt;6)]-beta-D-Man-(1-&gt;4)-beta-D-GlcNAc-(1-&gt;4)-beta-D-GlcNAc}-L-asparaginyl-[protein] + UDP + H(+). Its pathway is protein modification; protein glycosylation. In terms of biological role, glycosyltransferase that participates in the transfer of N-acetylglucosamine (GlcNAc) to the core mannose residues of N-linked glycans. Catalyzes the formation of the GlcNAcbeta1-4 branch on the GlcNAcbeta1-2Manalpha1-3 arm of the core structure of N-linked glycans. This Danio rerio (Zebrafish) protein is Alpha-1,3-mannosyl-glycoprotein 4-beta-N-acetylglucosaminyltransferase C (mgat4c).